The following is a 98-amino-acid chain: Large ribosomal subunit protein bL28 (98 aa).

The protein belongs to the bacterial ribosomal protein bL28 family.

In Mesorhizobium japonicum (strain LMG 29417 / CECT 9101 / MAFF 303099) (Mesorhizobium loti (strain MAFF 303099)), this protein is Large ribosomal subunit protein bL28.